Here is a 34-residue protein sequence, read N- to C-terminus: Mu-theraphotoxin-Df1a (34 aa).

3 disulfide bridges follow: C2-C16, C9-C21, and C15-C28. The residue at position 34 (F34) is a Phenylalanine amide.

This sequence belongs to the neurotoxin 10 (Hwtx-1) family. 54 (ProTx-1) subfamily. C-terminal amidation is important for the high potency of the toxin. In terms of tissue distribution, expressed by the venom gland.

It localises to the secreted. Its function is as follows. Inhibits sodium channel Nav1.7/SCN9A with high potency (IC(50)=117 nM) and Nav1.2/SCN2A, Nav1.3/SCN3A, Nav1.6/SCN8A and Nav1.5/SCN5 with weaker potency. Also inhibits voltage-gated calcium channel Cav3.1/CACNA1G, Cav3.2/CACNA1H and Cav3.3/CACNA1I. This chain is Mu-theraphotoxin-Df1a, found in Davus fasciatus (Costa Rican tiger rump).